The primary structure comprises 1706 residues: Histone acetyltransferase HAC12 (1706 aa).

Disordered stretches follow at residues 1-33 (MNVQ…MQNL), 251-284 (TNNN…NSHM), 397-456 (VSRV…LGKT), and 524-543 (QNSQ…SDSS). The span at 397–406 (VSRVNSSLSH) shows a compositional bias: polar residues. Low complexity predominate over residues 407–434 (QQQFQQPPNRFQQQPNQIQQQQQQFLNQ). The segment at 637-716 (HDPKFKNQQR…DPRCPVCVPV (80 aa)) adopts a TAZ-type 1 zinc-finger fold. Residues 791-909 (TESCKSSIVS…PELTSKSRKP (119 aa)) are disordered. Residues 794–805 (CKSSIVSTTEAD) are compositionally biased toward polar residues. 2 stretches are compositionally biased toward basic and acidic residues: residues 809 to 829 (DAER…KVEI) and 870 to 896 (PKQE…KEEL). The PHD-type zinc finger occupies 998–1075 (HYFCIPCYNE…EYTCPYCYVI (78 aa)). In terms of domain architecture, CBP/p300-type HAT spans 1090 to 1526 (VLGAKDLPRT…VLYHLHNPTA (437 aa)). Residues 1213–1215 (LDS), 1232–1233 (RT), and W1288 contribute to the acetyl-CoA site. 2 consecutive ZZ-type zinc fingers follow at residues 1408 to 1471 (HLQH…IADI) and 1528 to 1581 (AFVT…SLAD). Residues C1413, C1416, C1428, C1431, C1437, C1440, H1453, H1461, C1533, C1536, C1548, C1551, C1557, C1560, H1569, and H1571 each coordinate Zn(2+). The segment at 1588 to 1671 (EARQLRVLQL…ECDVPRCGDL (84 aa)) adopts a TAZ-type 2 zinc-finger fold.

The protein resides in the nucleus. The catalysed reaction is L-lysyl-[protein] + acetyl-CoA = N(6)-acetyl-L-lysyl-[protein] + CoA + H(+). Functionally, acetyltransferase enzyme. Acetylates histones, giving a specific tag for transcriptional activation. In Arabidopsis thaliana (Mouse-ear cress), this protein is Histone acetyltransferase HAC12 (HAC12).